Consider the following 97-residue polypeptide: Defensin alpha 4 (97 aa).

Positions 1-19 are cleaved as a signal peptide; sequence MRIIAILAAILLVALQVRA. The propeptide occupies 20–63; sequence GPLQARGDEAPGQEQRGPEDQDISISFAWDKSSALQVSGSTRGM. Cystine bridges form between C65-C93, C67-C82, and C72-C92. Residue D97 is a propeptide.

This sequence belongs to the alpha-defensin family. Homodimer; homodimerization seems to be required for killing S.aureus, but not E.coli. Interacts with CD4. Interacts with Bacillus anthracis lef; homodimerization is required for the interaction. In terms of processing, the three-dimensional structure formed by the three intramolecular disulfide bridges is indispensable for effective bacterial killing.

The protein resides in the secreted. The protein localises to the cytoplasmic vesicle. It is found in the secretory vesicle. In terms of biological role, host-defense peptide that has antimicrobial activity against Gram-negative bacteria, and to a lesser extent also against Gram-positive bacteria and fungi. Exhibits antimicrobial activity against Gram-negative E.coli and E.aerogenes and Gram-positive S.faecalis, S.aureus and B.cereus and the yeast C.albicans (in vitro). Inhibits corticotropin (ACTH)-stimulated corticosterone production (in vitro). Inhibits enzymatic activity of B.anthracis lef/anthrax lethal factor (in vitro). This chain is Defensin alpha 4 (DEFA4), found in Pan troglodytes (Chimpanzee).